A 263-amino-acid chain; its full sequence is Probable adenylate kinase 7, mitochondrial (263 aa).

A mitochondrion-targeting transit peptide spans 1 to 30 (MAWLSRVRGVSPVTRLAAIRRSFGSAAALE). Residue 72 to 77 (GAWRHV) participates in ATP binding. Residues 92–121 (SMGSLVRQELNPRSSLYKEIASAVNERKLV) are NMP. AMP is bound by residues R98, 119–121 (KLV), 149–152 (GIPR), Q156, and R206. Position 234 (G234) interacts with ATP.

This sequence belongs to the adenylate kinase family. Monomer.

The protein localises to the mitochondrion. It carries out the reaction AMP + ATP = 2 ADP. Its function is as follows. Catalyzes the reversible transfer of the terminal phosphate group between ATP and AMP. Plays an important role in cellular energy homeostasis and in adenine nucleotide metabolism. The sequence is that of Probable adenylate kinase 7, mitochondrial from Arabidopsis thaliana (Mouse-ear cress).